The chain runs to 366 residues: D-alanine--D-alanine ligase (366 aa).

Positions 150 to 353 (KRVLRDAGVP…YPALVDRLIV (204 aa)) constitute an ATP-grasp domain. 180–235 (IGQLGLPLFIKPASQGSSVGVSKVTDRAGFAAALALAFRYDAKVLVEQGISGREIE) contributes to the ATP binding site. Residues Asp-307, Glu-320, and Asn-322 each contribute to the Mg(2+) site.

Belongs to the D-alanine--D-alanine ligase family. Requires Mg(2+) as cofactor. Mn(2+) is required as a cofactor.

It localises to the cytoplasm. The enzyme catalyses 2 D-alanine + ATP = D-alanyl-D-alanine + ADP + phosphate + H(+). It participates in cell wall biogenesis; peptidoglycan biosynthesis. Cell wall formation. This is D-alanine--D-alanine ligase from Sodalis glossinidius (strain morsitans).